We begin with the raw amino-acid sequence, 62 residues long: Small, acid-soluble spore protein A (62 aa).

The protein belongs to the alpha/beta-type SASP family.

Its function is as follows. SASP are bound to spore DNA. They are double-stranded DNA-binding proteins that cause DNA to change to an a-like conformation. They protect the DNA backbone from chemical and enzymatic cleavage and are thus involved in dormant spore's high resistance to UV light. The protein is Small, acid-soluble spore protein A (sasP-A) of Priestia megaterium (Bacillus megaterium).